We begin with the raw amino-acid sequence, 294 residues long: Ribosomal RNA small subunit methyltransferase A (294 aa).

Positions 31, 33, 58, 79, 111, and 136 each coordinate S-adenosyl-L-methionine.

Belongs to the class I-like SAM-binding methyltransferase superfamily. rRNA adenine N(6)-methyltransferase family. RsmA subfamily.

The protein resides in the cytoplasm. The catalysed reaction is adenosine(1518)/adenosine(1519) in 16S rRNA + 4 S-adenosyl-L-methionine = N(6)-dimethyladenosine(1518)/N(6)-dimethyladenosine(1519) in 16S rRNA + 4 S-adenosyl-L-homocysteine + 4 H(+). Specifically dimethylates two adjacent adenosines (A1518 and A1519) in the loop of a conserved hairpin near the 3'-end of 16S rRNA in the 30S particle. May play a critical role in biogenesis of 30S subunits. This is Ribosomal RNA small subunit methyltransferase A from Lactobacillus acidophilus (strain ATCC 700396 / NCK56 / N2 / NCFM).